The sequence spans 475 residues: tRNA-2-methylthio-N(6)-dimethylallyladenosine synthase (475 aa).

Basic and acidic residues predominate over residues 1–10 (MQETTVKRDG). Residues 1–22 (MQETTVKRDGASPSDAGTPATT) form a disordered region. Residues 27–144 (GKLYIRTFGC…LPDLIKRRRA (118 aa)) enclose the MTTase N-terminal domain. Positions 36, 73, 107, 181, 185, and 188 each coordinate [4Fe-4S] cluster. Positions 167-400 (RVDGATAFVS…QALINQQAAA (234 aa)) constitute a Radical SAM core domain. The 64-residue stretch at 403 to 466 (QGMIGTRQRV…TNSLRGRVAG (64 aa)) folds into the TRAM domain.

This sequence belongs to the methylthiotransferase family. MiaB subfamily. As to quaternary structure, monomer. The cofactor is [4Fe-4S] cluster.

It localises to the cytoplasm. The enzyme catalyses N(6)-dimethylallyladenosine(37) in tRNA + (sulfur carrier)-SH + AH2 + 2 S-adenosyl-L-methionine = 2-methylsulfanyl-N(6)-dimethylallyladenosine(37) in tRNA + (sulfur carrier)-H + 5'-deoxyadenosine + L-methionine + A + S-adenosyl-L-homocysteine + 2 H(+). Its function is as follows. Catalyzes the methylthiolation of N6-(dimethylallyl)adenosine (i(6)A), leading to the formation of 2-methylthio-N6-(dimethylallyl)adenosine (ms(2)i(6)A) at position 37 in tRNAs that read codons beginning with uridine. This Bordetella bronchiseptica (strain ATCC BAA-588 / NCTC 13252 / RB50) (Alcaligenes bronchisepticus) protein is tRNA-2-methylthio-N(6)-dimethylallyladenosine synthase.